A 520-amino-acid chain; its full sequence is Tubby-related protein 2 (520 aa).

2 positions are modified to phosphoserine: serine 135 and serine 190. The segment at 141-236 (EVSVENGSVS…GTNSSAAHNE (96 aa)) is disordered. Positions 211–223 (QKEEDLEKKREAS) are enriched in basic and acidic residues. Polar residues predominate over residues 224 to 233 (ESTGTNSSAA).

The protein belongs to the TUB family. Strongly expressed in testis. Also expressed in retina. Expressed in cancer cell lines.

It is found in the cytoplasm. It localises to the secreted. The protein is Tubby-related protein 2 (TULP2) of Homo sapiens (Human).